The chain runs to 257 residues: Sad1-interacting factor 1 (257 aa).

Residues 16-68 form a disordered region; that stretch reads LNKIKQGGASRINQILGQNSDDSQSDVRATASEEAVHSETATPVTPMSSGFME. 2 stretches are compositionally biased toward polar residues: residues 26–37 and 54–63; these read RINQILGQNSDD and ETATPVTPMS. S35 carries the post-translational modification Phosphoserine. The residue at position 132 (S132) is a Phosphoserine. T134 carries the phosphothreonine modification. 2 helical membrane passes run 160–180 and 231–251; these read LLAI…LLPW and FTQL…CCYF.

Interacts with kms1 and sad1.

It localises to the membrane. This chain is Sad1-interacting factor 1 (sif1), found in Schizosaccharomyces pombe (strain 972 / ATCC 24843) (Fission yeast).